The following is a 102-amino-acid chain: Small ribosomal subunit protein uS10 (102 aa).

Belongs to the universal ribosomal protein uS10 family. In terms of assembly, part of the 30S ribosomal subunit.

Involved in the binding of tRNA to the ribosomes. The polypeptide is Small ribosomal subunit protein uS10 (Ligilactobacillus salivarius (strain UCC118) (Lactobacillus salivarius)).